Here is a 336-residue protein sequence, read N- to C-terminus: Large ribosomal subunit protein uL10 (336 aa).

The segment at 292 to 336 is disordered; sequence LKEKLSSRAAAPAPEEKEEEVEEEAEEEEEEEEEDAAAGLGALFG. Over residues 307–327 the composition is skewed to acidic residues; it reads EKEEEVEEEAEEEEEEEEEDA.

Belongs to the universal ribosomal protein uL10 family. In terms of assembly, part of the 50S ribosomal subunit. Forms part of the ribosomal stalk which helps the ribosome interact with GTP-bound translation factors. Forms a heptameric L10(L12)2(L12)2(L12)2 complex, where L10 forms an elongated spine to which the L12 dimers bind in a sequential fashion.

In terms of biological role, forms part of the ribosomal stalk, playing a central role in the interaction of the ribosome with GTP-bound translation factors. This chain is Large ribosomal subunit protein uL10, found in Methanothermobacter thermautotrophicus (strain ATCC 29096 / DSM 1053 / JCM 10044 / NBRC 100330 / Delta H) (Methanobacterium thermoautotrophicum).